The chain runs to 422 residues: UDP-N-acetylglucosamine 1-carboxyvinyltransferase (422 aa).

23 to 24 (KN) is a binding site for phosphoenolpyruvate. R92 provides a ligand contact to UDP-N-acetyl-alpha-D-glucosamine. The Proton donor role is filled by C116. At C116 the chain carries 2-(S-cysteinyl)pyruvic acid O-phosphothioketal. Residues 121–125 (RPVDL), 161–164 (KVSV), D306, and I328 each bind UDP-N-acetyl-alpha-D-glucosamine.

The protein belongs to the EPSP synthase family. MurA subfamily.

It localises to the cytoplasm. It carries out the reaction phosphoenolpyruvate + UDP-N-acetyl-alpha-D-glucosamine = UDP-N-acetyl-3-O-(1-carboxyvinyl)-alpha-D-glucosamine + phosphate. The protein operates within cell wall biogenesis; peptidoglycan biosynthesis. Functionally, cell wall formation. Adds enolpyruvyl to UDP-N-acetylglucosamine. The chain is UDP-N-acetylglucosamine 1-carboxyvinyltransferase from Aliivibrio salmonicida (strain LFI1238) (Vibrio salmonicida (strain LFI1238)).